Reading from the N-terminus, the 223-residue chain is Ribosomal RNA small subunit methyltransferase G (223 aa).

S-adenosyl-L-methionine-binding positions include glycine 90, leucine 95, 141-142 (VE), and arginine 156.

It belongs to the methyltransferase superfamily. RNA methyltransferase RsmG family.

It is found in the cytoplasm. It carries out the reaction guanosine(527) in 16S rRNA + S-adenosyl-L-methionine = N(7)-methylguanosine(527) in 16S rRNA + S-adenosyl-L-homocysteine. Its function is as follows. Specifically methylates the N7 position of guanine in position 527 of 16S rRNA. The protein is Ribosomal RNA small subunit methyltransferase G of Ralstonia nicotianae (strain ATCC BAA-1114 / GMI1000) (Ralstonia solanacearum).